The sequence spans 86 residues: Kappa-theraphotoxin-Cg1a 6 (86 aa).

A signal peptide spans 1-21 (MKVSVLITLAVLGVMFVWASA). The propeptide occupies 22–50 (AELEERGSDQRDSPAWLKSMERIFQSEER). 3 cysteine pairs are disulfide-bonded: Cys-52–Cys-66, Cys-59–Cys-71, and Cys-65–Cys-78. Phe-84 is modified (phenylalanine amide).

This sequence belongs to the neurotoxin 10 (Hwtx-1) family. 28 (Jztx-11) subfamily. Expressed by the venom gland.

The protein resides in the secreted. Its function is as follows. This toxin acts as a voltage-dependent gating-modifier. It inhibits the sodium conductance (IC(50)=124 nM) and slows the fast inactivation (EC(50)=1180 nM) of Nav1.5/SCN5A. It significantly shifts the activation to more depolarized voltages and decreases the deactivation of Nav1.5 currents upon extreme depolarization, but only slightly affects voltage-dependence of steady-state inactivation. In addition, this toxin causes an approximately five-fold decrease in the rate of recovery from inactivation and an approximately 1.9-fold reduction in the closed-state inactivation rate. This toxin integrates the functions of site 3 toxins (alpha-scorpion toxins) with site 4 toxins (beta-scorpion and spider toxins) by targeting multiple sites on Nav1.5. Also shows inhibition of voltage-gated potassium channels (5 uM completely inhibits Kv2.1/KCNB1, whereas 5 uM moderately inhibits Kv4.2/KCND2 Kv4.1/KCND1 channels). In Chilobrachys guangxiensis (Chinese earth tiger tarantula), this protein is Kappa-theraphotoxin-Cg1a 6.